The sequence spans 230 residues: tRNA (guanine-N(7)-)-methyltransferase (230 aa).

S-adenosyl-L-methionine-binding residues include E61, E86, D113, and D135. D135 is a catalytic residue. Substrate contacts are provided by residues K139, D171, and 209–212 (TRYE).

This sequence belongs to the class I-like SAM-binding methyltransferase superfamily. TrmB family.

The enzyme catalyses guanosine(46) in tRNA + S-adenosyl-L-methionine = N(7)-methylguanosine(46) in tRNA + S-adenosyl-L-homocysteine. It participates in tRNA modification; N(7)-methylguanine-tRNA biosynthesis. Functionally, catalyzes the formation of N(7)-methylguanine at position 46 (m7G46) in tRNA. This Azorhizobium caulinodans (strain ATCC 43989 / DSM 5975 / JCM 20966 / LMG 6465 / NBRC 14845 / NCIMB 13405 / ORS 571) protein is tRNA (guanine-N(7)-)-methyltransferase.